Reading from the N-terminus, the 264-residue chain is Thymidylate synthase (264 aa).

Arg-21 provides a ligand contact to dUMP. Residue His-51 coordinates (6R)-5,10-methylene-5,6,7,8-tetrahydrofolate. 126-127 (RR) contacts dUMP. Residue Cys-146 is the Nucleophile of the active site. Residues 166–169 (RSCD), Asn-177, and 207–209 (HLY) contribute to the dUMP site. Asp-169 provides a ligand contact to (6R)-5,10-methylene-5,6,7,8-tetrahydrofolate. Residue Ala-263 coordinates (6R)-5,10-methylene-5,6,7,8-tetrahydrofolate.

The protein belongs to the thymidylate synthase family. Bacterial-type ThyA subfamily. Homodimer.

Its subcellular location is the cytoplasm. The catalysed reaction is dUMP + (6R)-5,10-methylene-5,6,7,8-tetrahydrofolate = 7,8-dihydrofolate + dTMP. Its pathway is pyrimidine metabolism; dTTP biosynthesis. Functionally, catalyzes the reductive methylation of 2'-deoxyuridine-5'-monophosphate (dUMP) to 2'-deoxythymidine-5'-monophosphate (dTMP) while utilizing 5,10-methylenetetrahydrofolate (mTHF) as the methyl donor and reductant in the reaction, yielding dihydrofolate (DHF) as a by-product. This enzymatic reaction provides an intracellular de novo source of dTMP, an essential precursor for DNA biosynthesis. The sequence is that of Thymidylate synthase from Escherichia coli (strain 55989 / EAEC).